The primary structure comprises 116 residues: MRWDVIILYAISRPYATRRTGSHTHPRDSRYIAANQRRPPSACRVGPSPAKQRKDIPIFELLDTTLIKNALFALTSFLYYRTNILTCPFLNFLYLSRTGQLDKFCKDQTVTQILAT.

The N-terminal stretch at 1–19 is a signal peptide; the sequence is MRWDVIILYAISRPYATRR. The segment at 18 to 50 is disordered; it reads RRTGSHTHPRDSRYIAANQRRPPSACRVGPSPA.

This is an uncharacterized protein from Saccharomyces cerevisiae (strain ATCC 204508 / S288c) (Baker's yeast).